We begin with the raw amino-acid sequence, 165 residues long: UPF0254 protein MMP0935 (165 aa).

The protein belongs to the UPF0254 family.

The polypeptide is UPF0254 protein MMP0935 (Methanococcus maripaludis (strain DSM 14266 / JCM 13030 / NBRC 101832 / S2 / LL)).